Reading from the N-terminus, the 360-residue chain is Photosystem II protein D1 2 (360 aa).

The next 3 membrane-spanning stretches (helical) occupy residues 29 to 46, 118 to 133, and 142 to 156; these read YIGW…AATI, HFLI…EWEL, and WIPV…AATA. Residue His118 coordinates chlorophyll a. Tyr126 provides a ligand contact to pheophytin a. Positions 170 and 189 each coordinate [CaMn4O5] cluster. Residues 197–218 traverse the membrane as a helical segment; the sequence is FHMLGVAGVFGGALFAAMHGSL. His198 contacts chlorophyll a. A quinone contacts are provided by residues His215 and 264–265; that span reads SF. Position 215 (His215) interacts with Fe cation. His272 is a Fe cation binding site. A helical transmembrane segment spans residues 274–288; it reads FLAAWPVVGIWFAAL. The [CaMn4O5] cluster site is built by His332, Glu333, Asp342, and Ala344. Positions 345–360 are excised as a propeptide; sequence SGELAPVAMIAPSIEA.

It belongs to the reaction center PufL/M/PsbA/D family. PSII is composed of 1 copy each of membrane proteins PsbA, PsbB, PsbC, PsbD, PsbE, PsbF, PsbH, PsbI, PsbJ, PsbK, PsbL, PsbM, PsbT, PsbX, PsbY, PsbZ, Psb30/Ycf12, peripheral proteins PsbO, CyanoQ (PsbQ), PsbU, PsbV and a large number of cofactors. It forms dimeric complexes. Requires The D1/D2 heterodimer binds P680, chlorophylls that are the primary electron donor of PSII, and subsequent electron acceptors. It shares a non-heme iron and each subunit binds pheophytin, quinone, additional chlorophylls, carotenoids and lipids. D1 provides most of the ligands for the Mn4-Ca-O5 cluster of the oxygen-evolving complex (OEC). There is also a Cl(-1) ion associated with D1 and D2, which is required for oxygen evolution. The PSII complex binds additional chlorophylls, carotenoids and specific lipids. as cofactor. Tyr-161 forms a radical intermediate that is referred to as redox-active TyrZ, YZ or Y-Z. In terms of processing, C-terminally processed by CtpA; processing is essential to allow assembly of the oxygen-evolving complex and thus photosynthetic growth.

The protein resides in the cellular thylakoid membrane. The catalysed reaction is 2 a plastoquinone + 4 hnu + 2 H2O = 2 a plastoquinol + O2. In terms of biological role, photosystem II (PSII) is a light-driven water:plastoquinone oxidoreductase that uses light energy to abstract electrons from H(2)O, generating O(2) and a proton gradient subsequently used for ATP formation. It consists of a core antenna complex that captures photons, and an electron transfer chain that converts photonic excitation into a charge separation. The D1/D2 (PsbA/PsbD) reaction center heterodimer binds P680, the primary electron donor of PSII as well as several subsequent electron acceptors. This chain is Photosystem II protein D1 2, found in Synechococcus elongatus.